A 331-amino-acid chain; its full sequence is Tungstate uptake system ATP-binding protein TupC (331 aa).

An ABC transporter domain is found at 2-230 (IEISNLFFNY…NQGVKFCNFI (229 aa)). 34–41 (GANGSGKS) is an ATP binding site.

It belongs to the ABC transporter superfamily. As to quaternary structure, the complex is composed of two ATP-binding proteins (TupC), two transmembrane proteins (TupB) and a solute-binding protein (TupA).

It catalyses the reaction tungstate(in) + ATP + H2O = tungstate(out) + ADP + phosphate + H(+). Functionally, part of an ABC transporter complex involved in ultra-high affinity tungstate uptake. Probably responsible for energy coupling to the transport system. This Campylobacter jejuni subsp. jejuni serotype O:2 (strain ATCC 700819 / NCTC 11168) protein is Tungstate uptake system ATP-binding protein TupC.